We begin with the raw amino-acid sequence, 390 residues long: Succinate--CoA ligase [ADP-forming] subunit beta (390 aa).

The ATP-grasp domain occupies 9–244 (KEIFREYGVP…LSEEDPVEVE (236 aa)). ATP-binding positions include K46, 53–55 (GRG), E99, A102, and E107. Mg(2+) contacts are provided by N199 and D213. Residues N264 and 321–323 (GIV) contribute to the substrate site.

Belongs to the succinate/malate CoA ligase beta subunit family. As to quaternary structure, heterotetramer of two alpha and two beta subunits. Requires Mg(2+) as cofactor.

It catalyses the reaction succinate + ATP + CoA = succinyl-CoA + ADP + phosphate. The catalysed reaction is GTP + succinate + CoA = succinyl-CoA + GDP + phosphate. The protein operates within carbohydrate metabolism; tricarboxylic acid cycle; succinate from succinyl-CoA (ligase route): step 1/1. Its function is as follows. Succinyl-CoA synthetase functions in the citric acid cycle (TCA), coupling the hydrolysis of succinyl-CoA to the synthesis of either ATP or GTP and thus represents the only step of substrate-level phosphorylation in the TCA. The beta subunit provides nucleotide specificity of the enzyme and binds the substrate succinate, while the binding sites for coenzyme A and phosphate are found in the alpha subunit. This Nitratiruptor sp. (strain SB155-2) protein is Succinate--CoA ligase [ADP-forming] subunit beta.